The primary structure comprises 457 residues: Adenylosuccinate synthetase isozyme 1 (457 aa).

The segment at 1–24 (MSGTRASNDRPPGTGGVKRGRLQQ) is disordered. Residues 42-48 (GDEGKGK) and 70-72 (GHT) each bind GTP. The active-site Proton acceptor is aspartate 43. 2 residues coordinate Mg(2+): aspartate 43 and glycine 70. A substrate-binding site is contributed by aspartate 43. IMP contacts are provided by residues 43–46 (DEGK), 68–71 (NAGH), threonine 163, arginine 177, asparagine 256, threonine 271, and arginine 335. Histidine 71 acts as the Proton donor in catalysis. 331–337 (VTTGRKR) contacts substrate. Residues arginine 337, 363–365 (KLD), and 445–448 (GVGK) each bind GTP.

Belongs to the adenylosuccinate synthetase family. As to quaternary structure, homodimer. Mg(2+) serves as cofactor. In terms of tissue distribution, high levels in muscle.

It is found in the cytoplasm. The protein localises to the membrane. It catalyses the reaction IMP + L-aspartate + GTP = N(6)-(1,2-dicarboxyethyl)-AMP + GDP + phosphate + 2 H(+). It functions in the pathway purine metabolism; AMP biosynthesis via de novo pathway; AMP from IMP: step 1/2. Its activity is regulated as follows. Weakly inhibited by AMP non-competitively to all substrates. Inhibited by IMP non-competitively with respect to GTP. Inhibited by fructose 1,6-bisphosphate competitively with respect to IMP. Its function is as follows. Component of the purine nucleotide cycle (PNC), which interconverts IMP and AMP to regulate the nucleotide levels in various tissues, and which contributes to glycolysis and ammoniagenesis. Catalyzes the first committed step in the biosynthesis of AMP from IMP. The polypeptide is Adenylosuccinate synthetase isozyme 1 (Adss1) (Mus musculus (Mouse)).